Here is a 435-residue protein sequence, read N- to C-terminus: 5-methylthioadenosine/S-adenosylhomocysteine deaminase (435 aa).

Residues His65 and His67 each contribute to the Zn(2+) site. Residues Glu94, Arg150, and His189 each contribute to the substrate site. His216 contributes to the Zn(2+) binding site. Substrate contacts are provided by Glu219 and Asp304. Asp304 serves as a coordination point for Zn(2+).

This sequence belongs to the metallo-dependent hydrolases superfamily. MTA/SAH deaminase family. Requires Zn(2+) as cofactor.

The catalysed reaction is S-adenosyl-L-homocysteine + H2O + H(+) = S-inosyl-L-homocysteine + NH4(+). It carries out the reaction S-methyl-5'-thioadenosine + H2O + H(+) = S-methyl-5'-thioinosine + NH4(+). Its function is as follows. Catalyzes the deamination of 5-methylthioadenosine and S-adenosyl-L-homocysteine into 5-methylthioinosine and S-inosyl-L-homocysteine, respectively. Is also able to deaminate adenosine. This is 5-methylthioadenosine/S-adenosylhomocysteine deaminase from Bacillus cereus (strain ATCC 10987 / NRS 248).